Here is a 671-residue protein sequence, read N- to C-terminus: Replication protein A 70 kDa DNA-binding subunit (671 aa).

Disordered regions lie at residues 143 to 166 (QVSQ…PAVN) and 190 to 219 (MNKT…LQIS). Residues 199–213 (NNNNNNNNNGNNKNN) show a composition bias toward low complexity. Positions 240-322 (QTIKVRITKK…NKGDHTVTVN (83 aa)) form a DNA-binding region, OB. The C4-type zinc finger occupies 530 to 549 (CFSCKKKIARNNEVWTCINC).

It belongs to the replication factor A protein 1 family. Component of the replication protein A complex (RPA), a heterotrimeric complex composed of RPA1, RPA2/TEB2 and RPA3/TEB3.

As part of the heterotrimeric replication protein A (RPA) complex, binds and stabilizes single-stranded DNA intermediates, that form during DNA replication or upon DNA stress. It prevents their reannealing and in parallel, recruits and activates different proteins and complexes involved in DNA metabolism. Thereby, it plays an essential role both in DNA replication and the cellular response to DNA damage. In the cellular response to DNA damage, the RPA complex controls DNA repair and DNA damage checkpoint activation. The protein is Replication protein A 70 kDa DNA-binding subunit of Tetrahymena thermophila (strain SB210).